We begin with the raw amino-acid sequence, 534 residues long: ATP synthase subunit beta 2 (534 aa).

Position 185 to 192 (185 to 192 (GGAGVGKT)) interacts with ATP. The segment covering 494-505 (AAAREADARREA) has biased composition (basic and acidic residues). The disordered stretch occupies residues 494-534 (AAAREADARREAAAAASGAGPGTTSDPASGSAEPQGARHGR).

The protein belongs to the ATPase alpha/beta chains family. As to quaternary structure, F-type ATPases have 2 components, CF(1) - the catalytic core - and CF(0) - the membrane proton channel. CF(1) has five subunits: alpha(3), beta(3), gamma(1), delta(1), epsilon(1). CF(0) has three main subunits: a(1), b(2) and c(9-12). The alpha and beta chains form an alternating ring which encloses part of the gamma chain. CF(1) is attached to CF(0) by a central stalk formed by the gamma and epsilon chains, while a peripheral stalk is formed by the delta and b chains.

It localises to the cell inner membrane. The catalysed reaction is ATP + H2O + 4 H(+)(in) = ADP + phosphate + 5 H(+)(out). In terms of biological role, produces ATP from ADP in the presence of a proton gradient across the membrane. The catalytic sites are hosted primarily by the beta subunits. The protein is ATP synthase subunit beta 2 of Burkholderia mallei (strain NCTC 10247).